A 364-amino-acid polypeptide reads, in one-letter code: Probable dual-specificity RNA methyltransferase RlmN (364 aa).

Glu107 serves as the catalytic Proton acceptor. The Radical SAM core domain occupies 113–346 (HEYGNSVCVT…ATIRREQGSD (234 aa)). Cys120 and Cys351 are disulfide-bonded. Residues Cys127, Cys131, and Cys134 each contribute to the [4Fe-4S] cluster site. S-adenosyl-L-methionine-binding positions include 177–178 (GE), Ser209, 232–234 (SLH), and Asn308. The active-site S-methylcysteine intermediate is Cys351.

This sequence belongs to the radical SAM superfamily. RlmN family. [4Fe-4S] cluster serves as cofactor.

The protein resides in the cytoplasm. It carries out the reaction adenosine(2503) in 23S rRNA + 2 reduced [2Fe-2S]-[ferredoxin] + 2 S-adenosyl-L-methionine = 2-methyladenosine(2503) in 23S rRNA + 5'-deoxyadenosine + L-methionine + 2 oxidized [2Fe-2S]-[ferredoxin] + S-adenosyl-L-homocysteine. It catalyses the reaction adenosine(37) in tRNA + 2 reduced [2Fe-2S]-[ferredoxin] + 2 S-adenosyl-L-methionine = 2-methyladenosine(37) in tRNA + 5'-deoxyadenosine + L-methionine + 2 oxidized [2Fe-2S]-[ferredoxin] + S-adenosyl-L-homocysteine. In terms of biological role, specifically methylates position 2 of adenine 2503 in 23S rRNA and position 2 of adenine 37 in tRNAs. Confers resistance to some classes of antibiotics. In Staphylococcus epidermidis (strain ATCC 35984 / DSM 28319 / BCRC 17069 / CCUG 31568 / BM 3577 / RP62A), this protein is Probable dual-specificity RNA methyltransferase RlmN.